Consider the following 158-residue polypeptide: UPF0178 protein Rpal_2485 (158 aa).

Belongs to the UPF0178 family.

The chain is UPF0178 protein Rpal_2485 from Rhodopseudomonas palustris (strain TIE-1).